The following is a 178-amino-acid chain: Ribosome maturation factor RimM (178 aa).

One can recognise a PRC barrel domain in the interval 101–178; the sequence is ADEYYWYQLV…VMRVEWDADF (78 aa).

The protein belongs to the RimM family. As to quaternary structure, binds ribosomal protein uS19.

Its subcellular location is the cytoplasm. Functionally, an accessory protein needed during the final step in the assembly of 30S ribosomal subunit, possibly for assembly of the head region. Essential for efficient processing of 16S rRNA. May be needed both before and after RbfA during the maturation of 16S rRNA. It has affinity for free ribosomal 30S subunits but not for 70S ribosomes. The protein is Ribosome maturation factor RimM of Pseudomonas putida (strain ATCC 700007 / DSM 6899 / JCM 31910 / BCRC 17059 / LMG 24140 / F1).